Reading from the N-terminus, the 613-residue chain is Nuclear receptor subfamily 1 group D member 1 (613 aa).

The segment covering 1-48 (MTTLDSNNNTGGVITYIGSSGSSPNRTSPESLYSDSSNGSFQSLTQGC) has biased composition (polar residues). A required for phosphorylation by CSNK1E and cytoplasmic localization region spans residues 1 to 70 (MTTLDSNNNT…TQDPARSFGS (70 aa)). The interval 1–102 (MTTLDSNNNT…SSFYNGSPPG (102 aa)) is disordered. Residues 1 to 129 (MTTLDSNNNT…TSNITKLNGM (129 aa)) form a modulating region. The segment at 49–285 (PTYFPPSPTG…PPRSPSPEPT (237 aa)) is crucial for activation of GJA1. Residues Ser55 and Ser59 each carry the phosphoserine; by GSK3-beta modification. Positions 69–102 (GSIPPSLGDDGSPSSSSSSSSSSSSSFYNGSPPG) are enriched in low complexity. The segment at residues 130–206 (VLLCKVCGDV…VGMSRDAVRF (77 aa)) is a DNA-binding region (nuclear receptor). NR C4-type zinc fingers lie at residues 133-153 (CKVCGDVASGFHYGVHACEGC) and 170-194 (CLKNENCSIVRINRNRCQQCRFKKC). Lys192 and Lys193 each carry N6-acetyllysine; by KAT5. The tract at residues 233 to 286 (SSQCPLETPPTQHPTPGPMGPSPPPAPAPSPLVGFSQFPQQLTPPRSPSPEPTV) is disordered. The segment covering 239 to 262 (ETPPTQHPTPGPMGPSPPPAPAPS) has biased composition (pro residues). Position 275 is a phosphothreonine; by CDK1 (Thr275). An NR LBD domain is found at 285 to 613 (TVEDVISQVA…KLLSFRVDAQ (329 aa)). Residue Cys417 coordinates heme. Position 590 is an N6-acetyllysine (Lys590). Heme is bound at residue His601.

Belongs to the nuclear hormone receptor family. NR1 subfamily. In terms of assembly, binds DNA as a monomer or a homodimer. Interacts with C1D, SP1 and ZNHIT1. Interacts with OPHN1 (via C-terminus). Interacts with PER2; the interaction associates PER2 to BMAL1 promoter region. Interacts with CRY1. Interacts with CCAR2. Interacts with NR2E3. Interacts with SIAH2. Interacts with FBXW7 and CDK1. Interacts with HUWE1. Interacts with NR0B2. Interacts with NFIL3. Interacts (via domain NR LBD) with HSP90AA1 and HSP90AB1. Ubiquitinated, leading to its proteasomal degradation. Ubiquitinated by the SCF(FBXW7) complex when phosphorylated by CDK1 leading to its proteasomal degradation. Ubiquitinated by SIAH2; leading to its proteasomal degradation. Rapidly ubiquitinated in response to inflammatory triggers and sumoylation is a prerequisite to its ubiquitination. Post-translationally, sumoylated by UBE2I, desumoylated by SENP1, and sumoylation is a prerequisite to its ubiquitination. In terms of processing, phosphorylated by CSNK1E; phosphorylation enhances its cytoplasmic localization. Undergoes lysosome-mediated degradation in a time-dependent manner in the liver. Expressed in all tissues and cell lines examined. Expressed at high levels in some squamous carcinoma cell lines.

It localises to the nucleus. Its subcellular location is the cytoplasm. It is found in the cell projection. The protein resides in the dendrite. The protein localises to the dendritic spine. Its function is as follows. Transcriptional repressor which coordinates circadian rhythm and metabolic pathways in a heme-dependent manner. Integral component of the complex transcription machinery that governs circadian rhythmicity and forms a critical negative limb of the circadian clock by directly repressing the expression of core clock components BMAL1, CLOCK and CRY1. Also regulates genes involved in metabolic functions, including lipid and bile acid metabolism, adipogenesis, gluconeogenesis and the macrophage inflammatory response. Acts as a receptor for heme which stimulates its interaction with the NCOR1/HDAC3 corepressor complex, enhancing transcriptional repression. Recognizes two classes of DNA response elements within the promoter of its target genes and can bind to DNA as either monomers or homodimers, depending on the nature of the response element. Binds as a monomer to a response element composed of the consensus half-site motif 5'-[A/G]GGTCA-3' preceded by an A/T-rich 5' sequence (RevRE), or as a homodimer to a direct repeat of the core motif spaced by two nucleotides (RevDR-2). Acts as a potent competitive repressor of ROR alpha (RORA) function and regulates the levels of its ligand heme by repressing the expression of PPARGC1A, a potent inducer of heme synthesis. Regulates lipid metabolism by repressing the expression of APOC3 and by influencing the activity of sterol response element binding proteins (SREBPs); represses INSIG2 which interferes with the proteolytic activation of SREBPs which in turn govern the rhythmic expression of enzymes with key functions in sterol and fatty acid synthesis. Regulates gluconeogenesis via repression of G6PC1 and PEPCK and adipocyte differentiation via repression of PPARG. Regulates glucagon release in pancreatic alpha-cells via the AMPK-NAMPT-SIRT1 pathway and the proliferation, glucose-induced insulin secretion and expression of key lipogenic genes in pancreatic-beta cells. Positively regulates bile acid synthesis by increasing hepatic expression of CYP7A1 via repression of NR0B2 and NFIL3 which are negative regulators of CYP7A1. Modulates skeletal muscle oxidative capacity by regulating mitochondrial biogenesis and autophagy; controls mitochondrial biogenesis and respiration by interfering with the STK11-PRKAA1/2-SIRT1-PPARGC1A signaling pathway. Represses the expression of SERPINE1/PAI1, an important modulator of cardiovascular disease and the expression of inflammatory cytokines and chemokines in macrophages. Represses gene expression at a distance in macrophages by inhibiting the transcription of enhancer-derived RNAs (eRNAs). Plays a role in the circadian regulation of body temperature and negatively regulates thermogenic transcriptional programs in brown adipose tissue (BAT); imposes a circadian oscillation in BAT activity, increasing body temperature when awake and depressing thermogenesis during sleep. In concert with NR2E3, regulates transcriptional networks critical for photoreceptor development and function. In addition to its activity as a repressor, can also act as a transcriptional activator. In the ovarian granulosa cells acts as a transcriptional activator of STAR which plays a role in steroid biosynthesis. In collaboration with SP1, activates GJA1 transcription in a heme-independent manner. Represses the transcription of CYP2B10, CYP4A10 and CYP4A14. Represses the transcription of CES2. Represses and regulates the circadian expression of TSHB in a NCOR1-dependent manner. Negatively regulates the protein stability of NR3C1 and influences the time-dependent subcellular distribution of NR3C1, thereby affecting its transcriptional regulatory activity. Plays a critical role in the circadian control of neutrophilic inflammation in the lung; under resting, non-stress conditions, acts as a rhythmic repressor to limit inflammatory activity whereas in the presence of inflammatory triggers undergoes ubiquitin-mediated degradation thereby relieving inhibition of the inflammatory response. Plays a key role in the circadian regulation of microglial activation and neuroinflammation; suppresses microglial activation through the NF-kappaB pathway in the central nervous system. Plays a role in the regulation of the diurnal rhythms of lipid and protein metabolism in the skeletal muscle via transcriptional repression of genes controlling lipid and amino acid metabolism in the muscle. The protein is Nuclear receptor subfamily 1 group D member 1 (NR1D1) of Bos taurus (Bovine).